The primary structure comprises 381 residues: Meiotic recombination protein SPO11-1 (381 aa).

One can recognise a Topo IIA-type catalytic domain in the interval 23-162 (EEAATLLHRI…LNVVPVAKGL (140 aa)). Catalysis depends on Tyr123, which acts as the O-(5'-phospho-DNA)-tyrosine intermediate. Residues Glu209 and Asp261 each contribute to the Mg(2+) site.

Belongs to the TOP6A family. Mg(2+) serves as cofactor. As to expression, highly expressed in flowers before pollination. Expressed in roots and shoots.

The protein localises to the nucleus. The enzyme catalyses ATP-dependent breakage, passage and rejoining of double-stranded DNA.. Functionally, required for meiotic recombination. Mediates DNA cleavage that forms the double-strand breaks (DSB) that initiate meiotic recombination. May be involved in plant growth and development, and stress tolerance. The polypeptide is Meiotic recombination protein SPO11-1 (SPO11-1) (Oryza sativa subsp. indica (Rice)).